Consider the following 363-residue polypeptide: Chorismate synthase (363 aa).

The segment at 44–63 (DLDRRKPGTSRHTTQRQEPD) is disordered. Arginine 48 and arginine 54 together coordinate NADP(+). FMN is bound by residues 125–127 (RSS), 237–238 (NA), glycine 277, 292–296 (KPTSS), and arginine 318.

Belongs to the chorismate synthase family. As to quaternary structure, homotetramer. The cofactor is FMNH2.

It carries out the reaction 5-O-(1-carboxyvinyl)-3-phosphoshikimate = chorismate + phosphate. The protein operates within metabolic intermediate biosynthesis; chorismate biosynthesis; chorismate from D-erythrose 4-phosphate and phosphoenolpyruvate: step 7/7. Functionally, catalyzes the anti-1,4-elimination of the C-3 phosphate and the C-6 proR hydrogen from 5-enolpyruvylshikimate-3-phosphate (EPSP) to yield chorismate, which is the branch point compound that serves as the starting substrate for the three terminal pathways of aromatic amino acid biosynthesis. This reaction introduces a second double bond into the aromatic ring system. The protein is Chorismate synthase of Pseudomonas fluorescens (strain ATCC BAA-477 / NRRL B-23932 / Pf-5).